We begin with the raw amino-acid sequence, 258 residues long: Snake venom serine protease 3 (258 aa).

An N-terminal signal peptide occupies residues 1-18; sequence MVLIRVLANLLILQLSYA. The propeptide occupies 19-24; it reads QKSSEL. One can recognise a Peptidase S1 domain in the interval 25–249; that stretch reads IIGGHPCNIN…YTDWIQSIIA (225 aa). 6 disulfide bridges follow: C31–C163, C50–C66, C98–C256, C142–C210, C174–C189, and C200–C225. N44 is a glycosylation site (N-linked (GlcNAc...) asparagine). Active-site charge relay system residues include H65 and D110. S204 functions as the Charge relay system in the catalytic mechanism. N239 carries N-linked (GlcNAc...) asparagine glycosylation.

It belongs to the peptidase S1 family. Snake venom subfamily. As to quaternary structure, monomer. As to expression, expressed by the venom gland.

It localises to the secreted. Its function is as follows. Snake venom serine protease that may act in the hemostasis system of the prey. The protein is Snake venom serine protease 3 of Protobothrops jerdonii (Jerdon's pitviper).